We begin with the raw amino-acid sequence, 601 residues long: Sulfite reductase [NADPH] flavoprotein alpha-component (601 aa).

Residues 65–203 (ITIISASQTG…NYNKWSQDLL (139 aa)) enclose the Flavodoxin-like domain. Residues 71 to 76 (SQTGNA), 118 to 121 (STQG), and 154 to 163 (LGDTSYNLFC) each bind FMN. Residues 236 to 450 (KNPAEGIILT…IQTNDNFRLP (215 aa)) enclose the FAD-binding FR-type domain. Residues threonine 324, isoleucine 358, 388–391 (RLYS), 406–408 (TVG), and 421–424 (GGAS) contribute to the FAD site. NADP(+)-binding positions include 521-522 (SQ), 527-531 (KIYVQ), and aspartate 563. Tyrosine 601 is an FAD binding site.

This sequence belongs to the NADPH-dependent sulphite reductase flavoprotein subunit CysJ family. The protein in the N-terminal section; belongs to the flavodoxin family. It in the C-terminal section; belongs to the flavoprotein pyridine nucleotide cytochrome reductase family. In terms of assembly, alpha(8)-beta(8). The alpha component is a flavoprotein, the beta component is a hemoprotein. FAD serves as cofactor. Requires FMN as cofactor.

It carries out the reaction hydrogen sulfide + 3 NADP(+) + 3 H2O = sulfite + 3 NADPH + 4 H(+). It participates in sulfur metabolism; hydrogen sulfide biosynthesis; hydrogen sulfide from sulfite (NADPH route): step 1/1. In terms of biological role, component of the sulfite reductase complex that catalyzes the 6-electron reduction of sulfite to sulfide. This is one of several activities required for the biosynthesis of L-cysteine from sulfate. The flavoprotein component catalyzes the electron flow from NADPH -&gt; FAD -&gt; FMN to the hemoprotein component. The polypeptide is Sulfite reductase [NADPH] flavoprotein alpha-component (Buchnera aphidicola subsp. Acyrthosiphon pisum (strain APS) (Acyrthosiphon pisum symbiotic bacterium)).